A 231-amino-acid chain; its full sequence is MNRLMIVSLLGIATALGGCVSPPPKPNDPYYAPVLPRTPLPAAQNNGAIYQAGFEQNLYDDRKAFRVGDIITITLNEKTQASKKANSDIQKDSKTKMGLTSLFGSGMTTNNPIGGGDLSLSAEYGGSRDAKGDSQAGQSNSLTGSITVTVAEVLPNGILSVRGEKWMTLNTGNELVRIAGLVRADDIATDNTVSSTRVADARITYSGTGAFADASQPGWLDRFFLSPLWPF.

A signal peptide spans 1–18 (MNRLMIVSLLGIATALGG). Cys-19 carries the N-palmitoyl cysteine lipid modification. Cys-19 carries the S-diacylglycerol cysteine lipid modification. A disordered region spans residues 118-141 (LSLSAEYGGSRDAKGDSQAGQSNS).

This sequence belongs to the FlgH family. As to quaternary structure, the basal body constitutes a major portion of the flagellar organelle and consists of four rings (L,P,S, and M) mounted on a central rod.

It is found in the cell outer membrane. The protein resides in the bacterial flagellum basal body. Functionally, assembles around the rod to form the L-ring and probably protects the motor/basal body from shearing forces during rotation. This chain is Flagellar L-ring protein, found in Pseudomonas aeruginosa (strain UCBPP-PA14).